The following is a 212-amino-acid chain: Uracil phosphoribosyltransferase (212 aa).

Residues R78, R103, and 130-138 (DPMLATGGS) each bind 5-phospho-alpha-D-ribose 1-diphosphate. Uracil contacts are provided by residues I193 and 198–200 (GDA). D199 is a 5-phospho-alpha-D-ribose 1-diphosphate binding site.

It belongs to the UPRTase family. Mg(2+) serves as cofactor.

It catalyses the reaction UMP + diphosphate = 5-phospho-alpha-D-ribose 1-diphosphate + uracil. The protein operates within pyrimidine metabolism; UMP biosynthesis via salvage pathway; UMP from uracil: step 1/1. Its activity is regulated as follows. Allosterically activated by GTP. Its function is as follows. Catalyzes the conversion of uracil and 5-phospho-alpha-D-ribose 1-diphosphate (PRPP) to UMP and diphosphate. The sequence is that of Uracil phosphoribosyltransferase from Azotobacter vinelandii (strain DJ / ATCC BAA-1303).